A 66-amino-acid polypeptide reads, in one-letter code: Cell division protein ZapB (66 aa).

Positions Leu3 to Val59 form a coiled coil.

This sequence belongs to the ZapB family. In terms of assembly, homodimer. The ends of the coiled-coil dimer bind to each other, forming polymers. Interacts with FtsZ.

The protein localises to the cytoplasm. Its function is as follows. Non-essential, abundant cell division factor that is required for proper Z-ring formation. It is recruited early to the divisome by direct interaction with FtsZ, stimulating Z-ring assembly and thereby promoting cell division earlier in the cell cycle. Its recruitment to the Z-ring requires functional FtsA or ZipA. The protein is Cell division protein ZapB of Shewanella denitrificans (strain OS217 / ATCC BAA-1090 / DSM 15013).